The sequence spans 161 residues: Large ribosomal subunit protein uL15 (161 aa).

The tract at residues 1 to 57 (MRLKDAIPKKGSQQRGRRVGRGISAGQGASCGKGMRGQKSRSGGSTRPGFEGGQNPL) is disordered. The segment covering 23-35 (ISAGQGASCGKGM) has biased composition (gly residues).

The protein belongs to the universal ribosomal protein uL15 family. Part of the 50S ribosomal subunit.

Its function is as follows. Binds to the 23S rRNA. The polypeptide is Large ribosomal subunit protein uL15 (Trichodesmium erythraeum (strain IMS101)).